Consider the following 344-residue polypeptide: Homoserine O-acetyltransferase (344 aa).

The active-site Acyl-thioester intermediate is Cys-142. The substrate site is built by Lys-163 and Ser-192. The active-site Proton acceptor is the His-235. Glu-237 is an active-site residue. A substrate-binding site is contributed by Arg-249.

Belongs to the MetA family.

The protein localises to the cytoplasm. The enzyme catalyses L-homoserine + acetyl-CoA = O-acetyl-L-homoserine + CoA. Its pathway is amino-acid biosynthesis; L-methionine biosynthesis via de novo pathway; O-acetyl-L-homoserine from L-homoserine: step 1/1. Its function is as follows. Transfers an acetyl group from acetyl-CoA to L-homoserine, forming acetyl-L-homoserine. This chain is Homoserine O-acetyltransferase, found in Bifidobacterium adolescentis (strain ATCC 15703 / DSM 20083 / NCTC 11814 / E194a).